The sequence spans 596 residues: NADH-quinone oxidoreductase subunit C/D (596 aa).

An NADH dehydrogenase I subunit C region spans residues 1 to 186; sequence MTDLTAQEPA…SPFELTKAKQ (186 aa). Positions 210-596 are NADH dehydrogenase I subunit D; that stretch reads DFMFLNLGPN…IDFVMSDVDR (387 aa).

The protein in the N-terminal section; belongs to the complex I 30 kDa subunit family. This sequence in the C-terminal section; belongs to the complex I 49 kDa subunit family. NDH-1 is composed of 13 different subunits. Subunits NuoB, CD, E, F, and G constitute the peripheral sector of the complex.

Its subcellular location is the cell inner membrane. The enzyme catalyses a quinone + NADH + 5 H(+)(in) = a quinol + NAD(+) + 4 H(+)(out). NDH-1 shuttles electrons from NADH, via FMN and iron-sulfur (Fe-S) centers, to quinones in the respiratory chain. The immediate electron acceptor for the enzyme in this species is believed to be ubiquinone. Couples the redox reaction to proton translocation (for every two electrons transferred, four hydrogen ions are translocated across the cytoplasmic membrane), and thus conserves the redox energy in a proton gradient. The sequence is that of NADH-quinone oxidoreductase subunit C/D from Shigella flexneri serotype 5b (strain 8401).